The sequence spans 267 residues: GTP cyclohydrolase FolE2 2 (267 aa).

The protein belongs to the GTP cyclohydrolase IV family.

It carries out the reaction GTP + H2O = 7,8-dihydroneopterin 3'-triphosphate + formate + H(+). Its pathway is cofactor biosynthesis; 7,8-dihydroneopterin triphosphate biosynthesis; 7,8-dihydroneopterin triphosphate from GTP: step 1/1. Functionally, converts GTP to 7,8-dihydroneopterin triphosphate. This Cupriavidus metallidurans (strain ATCC 43123 / DSM 2839 / NBRC 102507 / CH34) (Ralstonia metallidurans) protein is GTP cyclohydrolase FolE2 2.